The chain runs to 424 residues: Serine hydroxymethyltransferase 2 (424 aa).

Residues Leu-125 and 129–131 contribute to the (6S)-5,6,7,8-tetrahydrofolate site; that span reads GHL. The residue at position 234 (Lys-234) is an N6-(pyridoxal phosphate)lysine. Glu-250 lines the (6S)-5,6,7,8-tetrahydrofolate pocket.

Belongs to the SHMT family. As to quaternary structure, homodimer. Pyridoxal 5'-phosphate is required as a cofactor.

The protein resides in the cytoplasm. The enzyme catalyses (6R)-5,10-methylene-5,6,7,8-tetrahydrofolate + glycine + H2O = (6S)-5,6,7,8-tetrahydrofolate + L-serine. Its pathway is one-carbon metabolism; tetrahydrofolate interconversion. It functions in the pathway amino-acid biosynthesis; glycine biosynthesis; glycine from L-serine: step 1/1. Its function is as follows. Catalyzes the reversible interconversion of serine and glycine with tetrahydrofolate (THF) serving as the one-carbon carrier. This reaction serves as the major source of one-carbon groups required for the biosynthesis of purines, thymidylate, methionine, and other important biomolecules. Also exhibits THF-independent aldolase activity toward beta-hydroxyamino acids, producing glycine and aldehydes, via a retro-aldol mechanism. In Ralstonia nicotianae (strain ATCC BAA-1114 / GMI1000) (Ralstonia solanacearum), this protein is Serine hydroxymethyltransferase 2.